We begin with the raw amino-acid sequence, 454 residues long: Bifunctional protein GlmU (454 aa).

The segment at 1–228 (MNKCAIILAA…FEETLGVNSR (228 aa)) is pyrophosphorylase. UDP-N-acetyl-alpha-D-glucosamine contacts are provided by residues 8–11 (LAAG), Lys22, Gln73, and 78–79 (GT). Asp103 contributes to the Mg(2+) binding site. UDP-N-acetyl-alpha-D-glucosamine is bound by residues Gly140, Glu154, Asn169, and Asn226. Position 226 (Asn226) interacts with Mg(2+). Positions 229–249 (AELAKVESIMRNRINRTHLDN) are linker. The segment at 250–454 (GVTIIDPLNT…EGWVERKKLK (205 aa)) is N-acetyltransferase. UDP-N-acetyl-alpha-D-glucosamine-binding residues include Arg331 and Lys349. His361 (proton acceptor) is an active-site residue. Tyr364 and Asn375 together coordinate UDP-N-acetyl-alpha-D-glucosamine. Acetyl-CoA is bound by residues 384 to 385 (NY), Ala421, and Arg438.

In the N-terminal section; belongs to the N-acetylglucosamine-1-phosphate uridyltransferase family. This sequence in the C-terminal section; belongs to the transferase hexapeptide repeat family. In terms of assembly, homotrimer. Mg(2+) serves as cofactor.

The protein localises to the cytoplasm. The catalysed reaction is alpha-D-glucosamine 1-phosphate + acetyl-CoA = N-acetyl-alpha-D-glucosamine 1-phosphate + CoA + H(+). It carries out the reaction N-acetyl-alpha-D-glucosamine 1-phosphate + UTP + H(+) = UDP-N-acetyl-alpha-D-glucosamine + diphosphate. It functions in the pathway nucleotide-sugar biosynthesis; UDP-N-acetyl-alpha-D-glucosamine biosynthesis; N-acetyl-alpha-D-glucosamine 1-phosphate from alpha-D-glucosamine 6-phosphate (route II): step 2/2. The protein operates within nucleotide-sugar biosynthesis; UDP-N-acetyl-alpha-D-glucosamine biosynthesis; UDP-N-acetyl-alpha-D-glucosamine from N-acetyl-alpha-D-glucosamine 1-phosphate: step 1/1. It participates in bacterial outer membrane biogenesis; LPS lipid A biosynthesis. Functionally, catalyzes the last two sequential reactions in the de novo biosynthetic pathway for UDP-N-acetylglucosamine (UDP-GlcNAc). The C-terminal domain catalyzes the transfer of acetyl group from acetyl coenzyme A to glucosamine-1-phosphate (GlcN-1-P) to produce N-acetylglucosamine-1-phosphate (GlcNAc-1-P), which is converted into UDP-GlcNAc by the transfer of uridine 5-monophosphate (from uridine 5-triphosphate), a reaction catalyzed by the N-terminal domain. The polypeptide is Bifunctional protein GlmU (Clostridium perfringens (strain SM101 / Type A)).